A 398-amino-acid polypeptide reads, in one-letter code: Bifunctional enzyme IspD/IspF (398 aa).

The tract at residues 1–234 is 2-C-methyl-D-erythritol 4-phosphate cytidylyltransferase; it reads MSNSKRTAAI…SRLGALLGDI (234 aa). The interval 235–398 is 2-C-methyl-D-erythritol 2,4-cyclodiphosphate synthase; that stretch reads RTGTGYDVHA…LPWGTNGLAD (164 aa). A divalent metal cation is bound by residues Asp-241 and His-243. 4-CDP-2-C-methyl-D-erythritol 2-phosphate is bound by residues 241-243 and 267-268; these read DVH and HS. His-275 lines the a divalent metal cation pocket. Residues 289–291, 365–368, Phe-372, and Arg-375 each bind 4-CDP-2-C-methyl-D-erythritol 2-phosphate; these read DIG and TTSE.

The protein in the N-terminal section; belongs to the IspD/TarI cytidylyltransferase family. IspD subfamily. This sequence in the C-terminal section; belongs to the IspF family. A divalent metal cation is required as a cofactor.

The enzyme catalyses 2-C-methyl-D-erythritol 4-phosphate + CTP + H(+) = 4-CDP-2-C-methyl-D-erythritol + diphosphate. The catalysed reaction is 4-CDP-2-C-methyl-D-erythritol 2-phosphate = 2-C-methyl-D-erythritol 2,4-cyclic diphosphate + CMP. It functions in the pathway isoprenoid biosynthesis; isopentenyl diphosphate biosynthesis via DXP pathway; isopentenyl diphosphate from 1-deoxy-D-xylulose 5-phosphate: step 2/6. Its pathway is isoprenoid biosynthesis; isopentenyl diphosphate biosynthesis via DXP pathway; isopentenyl diphosphate from 1-deoxy-D-xylulose 5-phosphate: step 4/6. Bifunctional enzyme that catalyzes the formation of 4-diphosphocytidyl-2-C-methyl-D-erythritol from CTP and 2-C-methyl-D-erythritol 4-phosphate (MEP) (IspD), and catalyzes the conversion of 4-diphosphocytidyl-2-C-methyl-D-erythritol 2-phosphate (CDP-ME2P) to 2-C-methyl-D-erythritol 2,4-cyclodiphosphate (ME-CPP) with a corresponding release of cytidine 5-monophosphate (CMP) (IspF). This chain is Bifunctional enzyme IspD/IspF, found in Rhodopseudomonas palustris (strain BisB18).